We begin with the raw amino-acid sequence, 452 residues long: Pup--protein ligase (452 aa).

Residue glutamate 9 coordinates Mg(2+). Arginine 53 provides a ligand contact to ATP. Residue tyrosine 55 participates in Mg(2+) binding. The active-site Proton acceptor is the aspartate 57. Mg(2+) is bound at residue glutamate 63. Threonine 66 and tryptophan 419 together coordinate ATP.

The protein belongs to the Pup ligase/Pup deamidase family. Pup-conjugating enzyme subfamily.

It carries out the reaction ATP + [prokaryotic ubiquitin-like protein]-L-glutamate + [protein]-L-lysine = ADP + phosphate + N(6)-([prokaryotic ubiquitin-like protein]-gamma-L-glutamyl)-[protein]-L-lysine.. The protein operates within protein degradation; proteasomal Pup-dependent pathway. It functions in the pathway protein modification; protein pupylation. In terms of biological role, catalyzes the covalent attachment of the prokaryotic ubiquitin-like protein modifier Pup to the proteasomal substrate proteins, thereby targeting them for proteasomal degradation. This tagging system is termed pupylation. The ligation reaction involves the side-chain carboxylate of the C-terminal glutamate of Pup and the side-chain amino group of a substrate lysine. This Mycobacteroides abscessus (strain ATCC 19977 / DSM 44196 / CCUG 20993 / CIP 104536 / JCM 13569 / NCTC 13031 / TMC 1543 / L948) (Mycobacterium abscessus) protein is Pup--protein ligase.